Consider the following 302-residue polypeptide: Riboflavin transporter (302 aa).

Helical transmembrane passes span 16-36 (AVVGALWMVLAGIAFSLLNVV), 44-64 (LAFPSASAAFWQYGFAFLFSL), 87-107 (VVLAALGVEAWVAGLAAVPIW), 109-129 (AIALVMTSPFFIILGARLFLG), 158-178 (IGWAALLPVLSALLWGASSLI), 191-213 (ITVWLLVLLTPINGGLALAAGFA), 227-247 (GLLTAVAQYFLTLAYAAADAA), and 264-284 (GWLFFGYAPAGYLWLGAALIL). 2 EamA domains span residues 30 to 151 (FSLL…MIIL) and 170 to 291 (LLWG…LFIM).

This sequence belongs to the drug/metabolite transporter (DMT) superfamily. 10 TMS drug/metabolite exporter (DME) (TC 2.A.7.3) family.

Its subcellular location is the cell membrane. Transports riboflavin into the cell. Can also transport FMN and FAD. Required for normal nodule development during colonization of pea plant roots. This Rhizobium johnstonii (strain DSM 114642 / LMG 32736 / 3841) (Rhizobium leguminosarum bv. viciae) protein is Riboflavin transporter.